Reading from the N-terminus, the 21-residue chain is Granule-bound starch synthase 1 (21 aa).

It belongs to the glycosyltransferase 1 family. Bacterial/plant glycogen synthase subfamily.

Its subcellular location is the plastid. The protein resides in the chloroplast. The protein localises to the amyloplast. It carries out the reaction an NDP-alpha-D-glucose + [(1-&gt;4)-alpha-D-glucosyl](n) = [(1-&gt;4)-alpha-D-glucosyl](n+1) + a ribonucleoside 5'-diphosphate + H(+). Its pathway is glycan biosynthesis; starch biosynthesis. This chain is Granule-bound starch synthase 1, found in Secale cereale (Rye).